A 765-amino-acid chain; its full sequence is LPS-assembly protein LptD (765 aa).

An N-terminal signal peptide occupies residues 1–18 (MQIRYLLALSLLPKLVLA).

Belongs to the LptD family. As to quaternary structure, component of the lipopolysaccharide transport and assembly complex. Interacts with LptE and LptA.

The protein resides in the cell outer membrane. Its function is as follows. Together with LptE, is involved in the assembly of lipopolysaccharide (LPS) at the surface of the outer membrane. This chain is LPS-assembly protein LptD, found in Shewanella oneidensis (strain ATCC 700550 / JCM 31522 / CIP 106686 / LMG 19005 / NCIMB 14063 / MR-1).